The sequence spans 96 residues: Co-chaperonin GroES (96 aa).

It belongs to the GroES chaperonin family. Heptamer of 7 subunits arranged in a ring. Interacts with the chaperonin GroEL.

The protein localises to the cytoplasm. In terms of biological role, together with the chaperonin GroEL, plays an essential role in assisting protein folding. The GroEL-GroES system forms a nano-cage that allows encapsulation of the non-native substrate proteins and provides a physical environment optimized to promote and accelerate protein folding. GroES binds to the apical surface of the GroEL ring, thereby capping the opening of the GroEL channel. The sequence is that of Co-chaperonin GroES from Shewanella sediminis (strain HAW-EB3).